The sequence spans 1128 residues: Probable serine/threonine-protein kinase DDB_G0283337 (1128 aa).

The segment covering Met1 to Asn17 has biased composition (low complexity). 5 disordered regions span residues Met1–Pro21, Ile60–Asn100, Arg131–Asn151, Asn236–Asn256, and Asn375–Gln504. 2 stretches are compositionally biased toward low complexity: residues Asn243–Asn256 and Asn375–Ser502. A Protein kinase domain is found at Leu777–Glu1054. Residues Ile783–Val791 and Lys809 each bind ATP. The active-site Proton acceptor is the Asp904.

Belongs to the protein kinase superfamily. Ser/Thr protein kinase family.

It carries out the reaction L-seryl-[protein] + ATP = O-phospho-L-seryl-[protein] + ADP + H(+). The catalysed reaction is L-threonyl-[protein] + ATP = O-phospho-L-threonyl-[protein] + ADP + H(+). This is Probable serine/threonine-protein kinase DDB_G0283337 from Dictyostelium discoideum (Social amoeba).